The primary structure comprises 552 residues: Putative E3 ubiquitin-protein ligase ARI6 (552 aa).

The interval 129–343 (REFTCGICFE…GGYYACNRYE (215 aa)) is TRIAD supradomain. Residues Cys-133, Cys-136, Cys-150, His-152, Cys-155, Cys-158, Cys-178, Cys-183, Cys-222, Cys-227, Cys-245, Cys-247, Cys-252, Cys-255, His-260, Cys-265, Cys-292, and Cys-295 each contribute to the Zn(2+) site. The RING-type 1 zinc finger occupies 133–183 (CGICFESYPLEETISVSCGHPFCATCWTGYISTSINDGPGCLMLKCPYPCC). An IBR-type zinc finger spans residues 202 to 265 (ERYYRYFLRS…SEEAHRPVDC (64 aa)). The RING-type 2; atypical zinc-finger motif lies at 292 to 322 (CPKCKRPIEKNHGCMHMTCTPPCKFEFCWLC). Cys-305 is a catalytic residue. The Zn(2+) site is built by Cys-310, Cys-314, Cys-319, Cys-322, His-329, and Cys-339. The disordered stretch occupies residues 518–552 (HAASSKPANCKPSSNTKDGGKGKKEALTMAGSAET). The segment covering 519 to 534 (AASSKPANCKPSSNTK) has biased composition (polar residues).

It belongs to the RBR family. Ariadne subfamily. Zn(2+) is required as a cofactor.

It carries out the reaction [E2 ubiquitin-conjugating enzyme]-S-ubiquitinyl-L-cysteine + [acceptor protein]-L-lysine = [E2 ubiquitin-conjugating enzyme]-L-cysteine + [acceptor protein]-N(6)-ubiquitinyl-L-lysine.. The protein operates within protein modification; protein ubiquitination. Functionally, might act as an E3 ubiquitin-protein ligase, or as part of E3 complex, which accepts ubiquitin from specific E2 ubiquitin-conjugating enzymes and then transfers it to substrates. This chain is Putative E3 ubiquitin-protein ligase ARI6 (ARI6), found in Arabidopsis thaliana (Mouse-ear cress).